A 526-amino-acid polypeptide reads, in one-letter code: Rho guanine nucleotide exchange factor 3 (526 aa).

The segment at 20–40 (ELPPASGPAKDAEEPSNKRVK) is disordered. Phosphoserine occurs at positions 47 and 70. The 183-residue stretch at 122–304 (KRQEAIFELS…QGIVAEINTK (183 aa)) folds into the DH domain. The 159-residue stretch at 291–449 (INIIQGIVAE…WLNCIRQAKE (159 aa)) folds into the PH domain. Disordered stretches follow at residues 464 to 502 (EGSFLNPTTGSRELQGETKLEQMDQSDSESDCSMDTSEV) and 507 to 526 (EHMEQTDSSCGNSRHGESNV). The segment covering 466 to 475 (SFLNPTTGSR) has biased composition (polar residues).

In terms of assembly, interacts with RHOA and RHOB.

The protein localises to the cytoplasm. In terms of biological role, acts as a guanine nucleotide exchange factor (GEF) for RhoA and RhoB GTPases. This chain is Rho guanine nucleotide exchange factor 3 (ARHGEF3), found in Macaca fascicularis (Crab-eating macaque).